A 590-amino-acid chain; its full sequence is Aspartate--tRNA(Asp/Asn) ligase (590 aa).

Position 170 (Glu170) interacts with L-aspartate. An aspartate region spans residues 194-197 (QLFK). Residue Arg216 coordinates L-aspartate. ATP contacts are provided by residues 216–218 (RDE) and Gln225. Residue His448 coordinates L-aspartate. Glu482 is a binding site for ATP. Residue Arg489 coordinates L-aspartate. An ATP-binding site is contributed by 534–537 (GWDR). The interval 557–590 (SGGGADPLTGAPAPITPQQRRESGIDAKPKKDGE) is disordered. The span at 575–590 (QRRESGIDAKPKKDGE) shows a compositional bias: basic and acidic residues.

Belongs to the class-II aminoacyl-tRNA synthetase family. Type 1 subfamily. Homodimer.

It localises to the cytoplasm. The catalysed reaction is tRNA(Asx) + L-aspartate + ATP = L-aspartyl-tRNA(Asx) + AMP + diphosphate. Aspartyl-tRNA synthetase with relaxed tRNA specificity since it is able to aspartylate not only its cognate tRNA(Asp) but also tRNA(Asn). Reaction proceeds in two steps: L-aspartate is first activated by ATP to form Asp-AMP and then transferred to the acceptor end of tRNA(Asp/Asn). The protein is Aspartate--tRNA(Asp/Asn) ligase of Mycobacterium sp. (strain KMS).